The sequence spans 211 residues: uncharacterized protein (211 aa).

2 stretches are compositionally biased toward low complexity: residues 1–19 (MQDP…SSSD) and 61–74 (SPSV…SSNA). Disordered regions lie at residues 1-27 (MQDP…STGS) and 54-94 (ASSR…EPHR).

In terms of assembly, interacts with RLK902. In terms of tissue distribution, expressed in inflorescences, stems, rosette leaves and weakly in roots.

This is an uncharacterized protein from Arabidopsis thaliana (Mouse-ear cress).